The chain runs to 497 residues: Actin-binding protein WASF2 (497 aa).

2 disordered regions span residues 173–203 and 239–436; these read KEKRKHRKEKKDNPNRGNVNPRKIKTRKEEW and ENVD…SDAR. The segment covering 252-263 has biased composition (low complexity); the sequence is SDSASSPSPSFS. 2 stretches are compositionally biased toward pro residues: residues 298 to 335 and 343 to 403; these read SHPPPAPPLSSPPGPKPGFAPPPAPPPPPPMSVPPPLP and GTPP…PPLP. In terms of domain architecture, WH2 spans 435–452; it reads ARSDLLSAIRQGFQLRRV. A Phosphoserine modification is found at Ser473.

It belongs to the SCAR/WAVE family. In terms of assembly, binds actin and the Arp2/3 complex. Interacts with BAIAP2. Component of the WAVE2 complex composed of ABI1, CYFIP1/SRA1, NCKAP1/NAP1 (NCKAP1l/HEM1 in hematopoietic cells) and WASF2/WAVE2. Directly interacts with BRK1. Interacts with human cytomegalovirus protein UL135. Interacts with FNBP1L (via the SH3 domain).

It is found in the cytoplasm. The protein localises to the cytoskeleton. The protein resides in the cell projection. Its subcellular location is the lamellipodium. It localises to the basolateral cell membrane. Functionally, downstream effector molecule involved in the transmission of signals from tyrosine kinase receptors and small GTPases to the actin cytoskeleton. Promotes formation of actin filaments. Part of the WAVE complex that regulates lamellipodia formation. The WAVE complex regulates actin filament reorganization via its interaction with the Arp2/3 complex. This Mus musculus (Mouse) protein is Actin-binding protein WASF2.